The primary structure comprises 372 residues: Anhydro-N-acetylmuramic acid kinase (372 aa).

21-28 (GTSMDGVD) contacts ATP.

Belongs to the anhydro-N-acetylmuramic acid kinase family.

The catalysed reaction is 1,6-anhydro-N-acetyl-beta-muramate + ATP + H2O = N-acetyl-D-muramate 6-phosphate + ADP + H(+). The protein operates within amino-sugar metabolism; 1,6-anhydro-N-acetylmuramate degradation. It participates in cell wall biogenesis; peptidoglycan recycling. Its function is as follows. Catalyzes the specific phosphorylation of 1,6-anhydro-N-acetylmuramic acid (anhMurNAc) with the simultaneous cleavage of the 1,6-anhydro ring, generating MurNAc-6-P. Is required for the utilization of anhMurNAc either imported from the medium or derived from its own cell wall murein, and thus plays a role in cell wall recycling. The polypeptide is Anhydro-N-acetylmuramic acid kinase (Bordetella avium (strain 197N)).